The primary structure comprises 390 residues: NADH-quinone oxidoreductase subunit D (390 aa).

Belongs to the complex I 49 kDa subunit family. NDH-1 is composed of 14 different subunits. Subunits NuoB, C, D, E, F, and G constitute the peripheral sector of the complex.

It localises to the cell membrane. It catalyses the reaction a quinone + NADH + 5 H(+)(in) = a quinol + NAD(+) + 4 H(+)(out). Functionally, NDH-1 shuttles electrons from NADH, via FMN and iron-sulfur (Fe-S) centers, to quinones in the respiratory chain. The immediate electron acceptor for the enzyme in this species is believed to be ubiquinone. Couples the redox reaction to proton translocation (for every two electrons transferred, four hydrogen ions are translocated across the cytoplasmic membrane), and thus conserves the redox energy in a proton gradient. This is NADH-quinone oxidoreductase subunit D from Wolbachia pipientis subsp. Culex pipiens (strain wPip).